We begin with the raw amino-acid sequence, 552 residues long: Putative transport protein YPN_3727 (552 aa).

Helical transmembrane passes span 1 to 21, 26 to 46, 65 to 85, 96 to 116, 119 to 139, and 158 to 178; these read MSAIALTVSMLALVAVLGLWI, IYGVGLGIGGVLFGGIIVGHF, FGLILFVYTIGIQVGPGFFSS, FAILMVVVGGLVTAIIHKLFA, LPIILGVFSGAVTNTPALGAA, and MGYAMAYPFGICGILLVMWLI. RCK C-terminal domains follow at residues 192 to 276 and 279 to 361; these read AFDS…VVGE and DVTL…IVGN. 6 helical membrane passes run 371 to 391, 393 to 413, 439 to 459, 464 to 484, 493 to 513, and 530 to 550; these read MLPVFIGVGLGVLLGSIPLFV, GFPAALRLGLAGGPLVVALIL, IVLFLSVVGLKSGGDFINTLV, LAWIGYGAMITGIPLLTVGIL, YLTLCGMLAGSMTDPPALAFA, and VYPLAMFLRIMSPQILAVLFW.

This sequence belongs to the AAE transporter (TC 2.A.81) family. YidE subfamily.

Its subcellular location is the cell membrane. The polypeptide is Putative transport protein YPN_3727 (Yersinia pestis bv. Antiqua (strain Nepal516)).